The following is a 566-amino-acid chain: E3 ubiquitin-protein ligase RNF220 (566 aa).

Lys277 participates in a covalent cross-link: Glycyl lysine isopeptide (Lys-Gly) (interchain with G-Cter in SUMO2). Positions 277 to 297 are disordered; that stretch reads KREGESPTASPHSSATDDLHH. Phosphoserine is present on Ser390. Positions 485–513 form a coiled coil; the sequence is EDSAVTTFEALKARVRELERQLSRGDRYK. Positions 514–522 are required for targeting to the cytoplasm; it reads CLICMDSYS. An RING-type zinc finger spans residues 514-553; it reads CLICMDSYSMPLTSIQCWHVHCEECWLRTLGAKKLCPQCN.

As to quaternary structure, interacts with SIN3B. Interacts with CTNNB1 (via Armadillo repeats 2-8). Interacts with USP7 (via MATH domain). Post-translationally, auto-ubiquitinated; leads to proteasomal degradation.

Its subcellular location is the cytoplasm. It is found in the nucleus. It carries out the reaction S-ubiquitinyl-[E2 ubiquitin-conjugating enzyme]-L-cysteine + [acceptor protein]-L-lysine = [E2 ubiquitin-conjugating enzyme]-L-cysteine + N(6)-ubiquitinyl-[acceptor protein]-L-lysine.. Its pathway is protein modification; protein ubiquitination. Functionally, E3 ubiquitin-protein ligase that promotes the ubiquitination and proteasomal degradation of SIN3B. Independently of its E3 ligase activity, acts as a CTNNB1 stabilizer through USP7-mediated deubiquitination of CTNNB1 and promotes Wnt signaling. Plays a critical role in the regulation of nuclear lamina. The polypeptide is E3 ubiquitin-protein ligase RNF220 (RNF220) (Macaca fascicularis (Crab-eating macaque)).